Consider the following 74-residue polypeptide: MAKPCAAFLVFLCLSMLILSIPDISCQMNDCDCDHDHRCGEWEDESHGNCKQHHLRVVCTCTLDCLDISSTSNA.

Residues 1–26 (MAKPCAAFLVFLCLSMLILSIPDISC) form the signal peptide. Disulfide bonds link Cys26–Cys50, Cys33–Cys59, and Cys39–Cys61.

Belongs to the DEFL family.

Its subcellular location is the secreted. This is Putative defensin-like protein 12 from Arabidopsis thaliana (Mouse-ear cress).